Reading from the N-terminus, the 571-residue chain is 15-cis-phytoene desaturase, chloroplastic/chromoplastic (571 aa).

The N-terminal 96 residues, 1 to 96 (MDTGCLSSMN…FRNSERPSKP (96 aa)), are a transit peptide targeting the chloroplast and chromoplast. FAD is bound by residues A107, 126 to 127 (EA), K134, 151 to 152 (HI), and Y157. R292 contributes to the substrate binding site. FAD is bound by residues I334 and D523. Substrate is bound at residue A531. Residue M533 participates in FAD binding.

Belongs to the carotenoid/retinoid oxidoreductase family. As to quaternary structure, homotetramer. FAD is required as a cofactor.

Its subcellular location is the plastid. It is found in the chloroplast. The protein localises to the chromoplast. It localises to the membrane. The enzyme catalyses 2 a plastoquinone + 15-cis-phytoene = 9,9',15-tri-cis-zeta-carotene + 2 a plastoquinol. Its pathway is carotenoid biosynthesis; lycopene biosynthesis. Converts phytoene into zeta-carotene via the intermediary of phytofluene by the symmetrical introduction of two double bonds at the C-11 and C-11' positions of phytoene with a concomitant isomerization of two neighboring double bonds at the C9 and C9' positions from trans to cis. This chain is 15-cis-phytoene desaturase, chloroplastic/chromoplastic (PDS1), found in Zea mays (Maize).